We begin with the raw amino-acid sequence, 233 residues long: ATP synthase subunit a (233 aa).

Transmembrane regions (helical) follow at residues 29 to 49 (FKHV…GLIV), 86 to 106 (VFPL…LGLV), 118 to 135 (TNAA…YQGL), 188 to 208 (VLFF…LFLL), and 209 to 229 (GKVL…KGAF).

This sequence belongs to the ATPase A chain family. As to quaternary structure, F-type ATPases have 2 components, CF(1) - the catalytic core - and CF(0) - the membrane proton channel. CF(1) has five subunits: alpha(3), beta(3), gamma(1), delta(1), epsilon(1). CF(0) has three main subunits: a(1), b(2) and c(9-12). The alpha and beta chains form an alternating ring which encloses part of the gamma chain. CF(1) is attached to CF(0) by a central stalk formed by the gamma and epsilon chains, while a peripheral stalk is formed by the delta and b chains.

Its subcellular location is the cell inner membrane. Functionally, key component of the proton channel; it plays a direct role in the translocation of protons across the membrane. The chain is ATP synthase subunit a from Nitratidesulfovibrio vulgaris (strain ATCC 29579 / DSM 644 / CCUG 34227 / NCIMB 8303 / VKM B-1760 / Hildenborough) (Desulfovibrio vulgaris).